Consider the following 209-residue polypeptide: Orotate phosphoribosyltransferase (209 aa).

Residues Arg-96, Lys-100, His-102, and 122–130 each bind 5-phospho-alpha-D-ribose 1-diphosphate; that span reads EDLISTGGS. Residue Ser-126 coordinates orotate.

This sequence belongs to the purine/pyrimidine phosphoribosyltransferase family. PyrE subfamily. Homodimer. Mg(2+) serves as cofactor.

It catalyses the reaction orotidine 5'-phosphate + diphosphate = orotate + 5-phospho-alpha-D-ribose 1-diphosphate. Its pathway is pyrimidine metabolism; UMP biosynthesis via de novo pathway; UMP from orotate: step 1/2. Catalyzes the transfer of a ribosyl phosphate group from 5-phosphoribose 1-diphosphate to orotate, leading to the formation of orotidine monophosphate (OMP). In Listeria innocua serovar 6a (strain ATCC BAA-680 / CLIP 11262), this protein is Orotate phosphoribosyltransferase.